The sequence spans 444 residues: MPGIKVFGETVLRGSVRVSGAKNATTKLLVASLLSDQRTILKNVPNIEDVRQTVDLCRVLGAIVEWDQQAQVIEIHTPRILLSKVPPQFSCVNRIPILLLGALLRRCPYGIFVPILGGDAIGPRTLHFHLEGLKKLGAEIVISDEGYWASAPNGLVGAHITLPYPSVGATENLILASVGAQGRTIIKNAALEVEIIDLIVFLQKAGMEITTDNDKTIEIFGCQDFYSVEHSIIPDKIEAASFGMAAVVSQGRIFVEQARHEHMIPFLKVLRSIGGGFSVHENGIEFFYDKPLKGGVLLETDVHPGFITDWQQPFAVLLSQSEGCSVIHETVHENRLGYLKGLVKMGAHCDLFHECLSAKSCRYSTGNHPHSAVIHGPTPLQATDLVIPDLRAGFAYVMAALITEGGASWIENTEMLDRGYTDWRGKLERLGAKVLARDSVSVYV.

Residue K22–N23 coordinates phosphoenolpyruvate. Position 94 (R94) interacts with UDP-N-acetyl-alpha-D-glucosamine. D119 (proton donor) is an active-site residue. Residues D309 and V331 each contribute to the UDP-N-acetyl-alpha-D-glucosamine site.

It belongs to the EPSP synthase family. MurA subfamily.

It is found in the cytoplasm. It carries out the reaction phosphoenolpyruvate + UDP-N-acetyl-alpha-D-glucosamine = UDP-N-acetyl-3-O-(1-carboxyvinyl)-alpha-D-glucosamine + phosphate. Its pathway is cell wall biogenesis; peptidoglycan biosynthesis. Functionally, cell wall formation. Adds enolpyruvyl to UDP-N-acetylglucosamine. The sequence is that of UDP-N-acetylglucosamine 1-carboxyvinyltransferase from Chlamydia trachomatis serovar A (strain ATCC VR-571B / DSM 19440 / HAR-13).